We begin with the raw amino-acid sequence, 188 residues long: Elongation factor P-like protein (188 aa).

This sequence belongs to the elongation factor P family.

The sequence is that of Elongation factor P-like protein from Vibrio cholerae serotype O1 (strain ATCC 39541 / Classical Ogawa 395 / O395).